The primary structure comprises 44 residues: Defensin-like protein 1 (44 aa).

Residue Gln-1 is modified to Pyrrolidone carboxylic acid. Residues Cys-15 and Cys-36 are joined by a disulfide bond.

The protein belongs to the DEFL family. In terms of assembly, forms oligomers in its native state.

It localises to the secreted. Possesses antifungal activity sensitive to inorganic cations. The polypeptide is Defensin-like protein 1 (AFP1) (Brassica napus (Rape)).